The sequence spans 388 residues: Leucine aminopeptidase 1 (388 aa).

Residues 1–19 (MRSSVLFSLYAATLVAAVA) form the signal peptide. The propeptide occupies 20–88 (HPKDPQIVLQ…TLNHKLSTES (69 aa)). The N-linked (GlcNAc...) asparagine glycan is linked to Asn98. Residues His187, Asp206, Glu245, and Asp272 each contribute to the Zn(2+) site. The cysteines at positions 321 and 325 are disulfide-linked. His354 lines the Zn(2+) pocket.

Belongs to the peptidase M28 family. M28E subfamily. Monomer. Zn(2+) serves as cofactor.

The protein resides in the secreted. Its function is as follows. Extracellular aminopeptidase that allows assimilation of proteinaceous substrates. This chain is Leucine aminopeptidase 1 (LAP1), found in Leptosphaeria maculans (strain JN3 / isolate v23.1.3 / race Av1-4-5-6-7-8) (Blackleg fungus).